We begin with the raw amino-acid sequence, 419 residues long: S-adenosylmethionine synthase (419 aa).

ATP is bound at residue His14. Asp16 serves as a coordination point for Mg(2+). Residue Glu42 participates in K(+) binding. Residues Glu55 and Gln98 each coordinate L-methionine. The segment at 98–108 (QSQDIYQGVDR) is flexible loop. Residues 164-166 (DSK), 242-243 (KF), Asp251, 257-258 (RK), Ala274, and Lys278 contribute to the ATP site. Asp251 lines the L-methionine pocket. Lys282 is a binding site for L-methionine.

Belongs to the AdoMet synthase family. Homotetramer; dimer of dimers. It depends on Mg(2+) as a cofactor. K(+) is required as a cofactor.

It is found in the cytoplasm. It catalyses the reaction L-methionine + ATP + H2O = S-adenosyl-L-methionine + phosphate + diphosphate. Its pathway is amino-acid biosynthesis; S-adenosyl-L-methionine biosynthesis; S-adenosyl-L-methionine from L-methionine: step 1/1. Functionally, catalyzes the formation of S-adenosylmethionine (AdoMet) from methionine and ATP. The overall synthetic reaction is composed of two sequential steps, AdoMet formation and the subsequent tripolyphosphate hydrolysis which occurs prior to release of AdoMet from the enzyme. This chain is S-adenosylmethionine synthase, found in Christiangramia forsetii (strain DSM 17595 / CGMCC 1.15422 / KT0803) (Gramella forsetii).